We begin with the raw amino-acid sequence, 204 residues long: MSQLTISKIIEEPFSALSLSEMLKILAALGWSTNYLAMVYRTQADKLPAIAVLPLCCDIAWEFTYAWIYPQASGHWQGVVRVWFFLHTAVLAATLRYAPNDWAGTPLGESRGRLVLLYAAVIAAFAAGQLCLALEMGGALGFHWGGALCQFLSSSAAVGQLLTRGHTRGASLLIWGARAISTAGGDRALIGCVVSGAVPIDQKA.

A run of 5 helical transmembrane segments spans residues L19–V39, A49–Y69, H75–L95, L114–L134, and G138–V158.

The protein belongs to the paxB family.

It is found in the membrane. It participates in secondary metabolite biosynthesis; terpenoid biosynthesis. Functionally, terpene cyclase; part of the gene cluster B that mediates the biosynthesis of austinol and dehydroaustinol, two fungal meroterpenoids. The first step of the pathway is the synthesis of 3,5-dimethylorsellinic acid by the polyketide synthase ausA. 3,5-dimethylorsellinic acid is then prenylated by the polyprenyl transferase ausN. Further epoxidation by the FAD-dependent monooxygenase ausM and cyclization by the probable terpene cyclase ausL lead to the formation of protoaustinoid A. Protoaustinoid A is then oxidized to spiro-lactone preaustinoid A3 by the combined action of the FAD-binding monooxygenases ausB and ausC, and the dioxygenase ausE. Acid-catalyzed keto-rearrangement and ring contraction of the tetraketide portion of preaustinoid A3 by ausJ lead to the formation of preaustinoid A4. The aldo-keto reductase ausK, with the help of ausH, is involved in the next step by transforming preaustinoid A4 into isoaustinone which is in turn hydroxylated by the P450 monooxygenase ausI to form austinolide. Finally, the cytochrome P450 monooxygenase ausG modifies austinolide to austinol. Austinol can be further modified to dehydroaustinol which forms a diffusible complex with diorcinol that initiates conidiation. Due to genetic rearrangements of the clusters and the subsequent loss of some enzymes, the end products of the Emericella nidulans austinoid biosynthesis clusters are austinol and dehydroaustinol, even if additional enzymes, such as the O-acetyltransferase ausQ and the cytochrome P450 monooxygenase ausR are still functional. This Emericella nidulans (strain FGSC A4 / ATCC 38163 / CBS 112.46 / NRRL 194 / M139) (Aspergillus nidulans) protein is Terpene cyclase ausL.